The chain runs to 127 residues: MIYGVGVDIVNIERVERILSKNKEGFVKRVLSEYEQVLFAKKGDSSTYCAKRFSAKEAFAKALGIGIGKIVSFQDLTICNNKQGNPYFIFSAKLCLYLVDKNIKKAHLSLSDEKFNAMAFVILEIEN.

Mg(2+)-binding residues include Asp-8 and Glu-57.

Belongs to the P-Pant transferase superfamily. AcpS family. Mg(2+) is required as a cofactor.

The protein localises to the cytoplasm. The enzyme catalyses apo-[ACP] + CoA = holo-[ACP] + adenosine 3',5'-bisphosphate + H(+). In terms of biological role, transfers the 4'-phosphopantetheine moiety from coenzyme A to a Ser of acyl-carrier-protein. This chain is Holo-[acyl-carrier-protein] synthase, found in Vesicomyosocius okutanii subsp. Calyptogena okutanii (strain HA).